Reading from the N-terminus, the 286-residue chain is 4-hydroxy-tetrahydrodipicolinate synthase 2 (286 aa).

Position 45 (threonine 45) interacts with pyruvate. The Proton donor/acceptor role is filled by tyrosine 133. Residue lysine 161 is the Schiff-base intermediate with substrate of the active site. Isoleucine 203 contributes to the pyruvate binding site.

Belongs to the DapA family. Homotetramer; dimer of dimers.

The protein resides in the cytoplasm. The catalysed reaction is L-aspartate 4-semialdehyde + pyruvate = (2S,4S)-4-hydroxy-2,3,4,5-tetrahydrodipicolinate + H2O + H(+). Its pathway is amino-acid biosynthesis; L-lysine biosynthesis via DAP pathway; (S)-tetrahydrodipicolinate from L-aspartate: step 3/4. Its function is as follows. Catalyzes the condensation of (S)-aspartate-beta-semialdehyde [(S)-ASA] and pyruvate to 4-hydroxy-tetrahydrodipicolinate (HTPA). The sequence is that of 4-hydroxy-tetrahydrodipicolinate synthase 2 from Clostridium acetobutylicum (strain ATCC 824 / DSM 792 / JCM 1419 / IAM 19013 / LMG 5710 / NBRC 13948 / NRRL B-527 / VKM B-1787 / 2291 / W).